The sequence spans 244 residues: NH(3)-dependent NAD(+) synthetase (244 aa).

ATP is bound at residue 29-36 (GISGGIDS). Asp35 serves as a coordination point for Mg(2+). Residue Arg113 coordinates deamido-NAD(+). Thr133 contributes to the ATP binding site. Glu138 provides a ligand contact to Mg(2+). Lys146 and Asp153 together coordinate deamido-NAD(+). ATP-binding residues include Lys162 and Thr184. 230–231 (HK) provides a ligand contact to deamido-NAD(+).

It belongs to the NAD synthetase family. As to quaternary structure, homodimer.

The enzyme catalyses deamido-NAD(+) + NH4(+) + ATP = AMP + diphosphate + NAD(+) + H(+). It functions in the pathway cofactor biosynthesis; NAD(+) biosynthesis; NAD(+) from deamido-NAD(+) (ammonia route): step 1/1. In terms of biological role, catalyzes the ATP-dependent amidation of deamido-NAD to form NAD. Uses ammonia as a nitrogen source. This is NH(3)-dependent NAD(+) synthetase from Mesoplasma florum (strain ATCC 33453 / NBRC 100688 / NCTC 11704 / L1) (Acholeplasma florum).